The sequence spans 225 residues: Small ribosomal subunit protein eS1 (225 aa).

Belongs to the eukaryotic ribosomal protein eS1 family.

The sequence is that of Small ribosomal subunit protein eS1 from Methanococcus maripaludis (strain C6 / ATCC BAA-1332).